Here is a 435-residue protein sequence, read N- to C-terminus: Envelope glycoprotein M (435 aa).

At 1 to 36 the chain is on the intravirion side; that stretch reads MGTQKKGPRSEKVSPYDTTTPEVEALDHQMDTLNWR. The helical transmembrane segment at 37 to 57 threads the bilayer; that stretch reads IWIIQVMMFTLGAVMLLATLI. Residues 58-111 lie on the Virion surface side of the membrane; the sequence is AASSEYTGIPCFYAAVVDYELFNATLDGGVWSGNRGGYSAPVLFLEPHSVVAFT. Residues 112-132 form a helical membrane-spanning segment; the sequence is YYTALTAMAMAVYTLITAAII. Residues 133–155 lie on the Intravirion side of the membrane; that stretch reads HRETKNQRVRQSSGVAWLVVDPT. Residues 156-176 traverse the membrane as a helical segment; that stretch reads TLFWGLLSLWLLNAVVLLLAY. Residues 177–178 are Virion surface-facing; sequence KQ. The chain crosses the membrane as a helical span at residues 179–199; that stretch reads IGVAATLYLGHFATSVIFTTY. At 200–233 the chain is on the intravirion side; the sequence is FCGRGKLDETNIKAVANLRQQSVFLYRLAGPTRA. The helical transmembrane segment at 234-254 threads the bilayer; sequence VFVNLMAALMAICILFVSLML. Residues 255 to 265 are Virion surface-facing; it reads ELVVANHLHTG. The helical transmembrane segment at 266–288 threads the bilayer; it reads LWSSVSVAMSTFSTLSVVYLIVS. The Intravirion portion of the chain corresponds to 289 to 294; sequence ELILAH. Residues 295–317 traverse the membrane as a helical segment; that stretch reads YIHVLIGPSLGTLVACATLGTAA. Topologically, residues 318-334 are virion surface; that stretch reads HSYMDRLYDPISVQSPR. Residues 335 to 355 traverse the membrane as a helical segment; that stretch reads LIPTTRGTLACLAVFSVVMLL. Residues 356 to 435 lie on the Intravirion side of the membrane; sequence LRLMRAYVYH…LYERSNSGWE (80 aa).

Belongs to the herpesviridae glycoprotein M family. In terms of assembly, interacts (via N-terminus) with gN (via N-terminus). The gM-gN heterodimer forms the gCII complex.

It localises to the virion membrane. It is found in the host Golgi apparatus. The protein resides in the host trans-Golgi network. Its subcellular location is the host endosome membrane. The protein localises to the host nucleus inner membrane. Envelope glycoprotein important for virion assembly and egress. Plays a role in the correct incorporation of gH-gL into virion membrane. Directs the glycoprotein N (gN) to the host trans-Golgi network. The sequence is that of Envelope glycoprotein M from Homo sapiens (Human).